Reading from the N-terminus, the 532-residue chain is Light-independent protochlorophyllide reductase subunit B (532 aa).

Aspartate 36 provides a ligand contact to [4Fe-4S] cluster. Aspartate 292 serves as the catalytic Proton donor. Residue 428–429 (GL) coordinates substrate. A disordered region spans residues 445 to 486 (EEEEPESISNGHAAAAGSEGGVPDSGEAGDAGDTDGMPWSPD).

The protein belongs to the ChlB/BchB/BchZ family. As to quaternary structure, protochlorophyllide reductase is composed of three subunits; BchL, BchN and BchB. Forms a heterotetramer of two BchB and two BchN subunits. [4Fe-4S] cluster is required as a cofactor.

The catalysed reaction is chlorophyllide a + oxidized 2[4Fe-4S]-[ferredoxin] + 2 ADP + 2 phosphate = protochlorophyllide a + reduced 2[4Fe-4S]-[ferredoxin] + 2 ATP + 2 H2O. It participates in porphyrin-containing compound metabolism; bacteriochlorophyll biosynthesis (light-independent). Its function is as follows. Component of the dark-operative protochlorophyllide reductase (DPOR) that uses Mg-ATP and reduced ferredoxin to reduce ring D of protochlorophyllide (Pchlide) to form chlorophyllide a (Chlide). This reaction is light-independent. The NB-protein (BchN-BchB) is the catalytic component of the complex. The polypeptide is Light-independent protochlorophyllide reductase subunit B (Chlorobium phaeobacteroides (strain BS1)).